The sequence spans 93 residues: MATAKPTFEEQLAQLQQIVNHLEQGNVPLEEALQQFQEGIKLSKELQTKLTNAEKTLGHLIDDNGDEKVYEKQTDDPSNNGGGNRGFGSADEQ.

Positions 61 to 75 are enriched in basic and acidic residues; the sequence is IDDNGDEKVYEKQTD. Residues 61 to 93 form a disordered region; sequence IDDNGDEKVYEKQTDDPSNNGGGNRGFGSADEQ.

It belongs to the XseB family. Heterooligomer composed of large and small subunits.

Its subcellular location is the cytoplasm. It carries out the reaction Exonucleolytic cleavage in either 5'- to 3'- or 3'- to 5'-direction to yield nucleoside 5'-phosphates.. Its function is as follows. Bidirectionally degrades single-stranded DNA into large acid-insoluble oligonucleotides, which are then degraded further into small acid-soluble oligonucleotides. The polypeptide is Exodeoxyribonuclease 7 small subunit (Limosilactobacillus reuteri (strain DSM 20016) (Lactobacillus reuteri)).